A 249-amino-acid chain; its full sequence is Triosephosphate isomerase (249 aa).

Positions 10 and 12 each coordinate substrate. The active-site Electrophile is the His94. Residue Glu166 is the Proton acceptor of the active site.

It belongs to the triosephosphate isomerase family. In terms of assembly, homodimer. The N-terminus is blocked.

It catalyses the reaction D-glyceraldehyde 3-phosphate = dihydroxyacetone phosphate. The protein operates within carbohydrate biosynthesis; gluconeogenesis. It participates in carbohydrate degradation; glycolysis; D-glyceraldehyde 3-phosphate from glycerone phosphate: step 1/1. This is Triosephosphate isomerase (TPI1) from Paracoccidioides lutzii (strain ATCC MYA-826 / Pb01) (Paracoccidioides brasiliensis).